Here is a 215-residue protein sequence, read N- to C-terminus: RNA pyrophosphohydrolase (215 aa).

A Nudix hydrolase domain is found at 6 to 149; sequence GFRPNVGIIL…KRDVYQLALT (144 aa). The Nudix box signature appears at 38–59; the sequence is GGIKYGETPMQAMYRELHEETG.

This sequence belongs to the Nudix hydrolase family. RppH subfamily. The cofactor is a divalent metal cation.

Functionally, accelerates the degradation of transcripts by removing pyrophosphate from the 5'-end of triphosphorylated RNA, leading to a more labile monophosphorylated state that can stimulate subsequent ribonuclease cleavage. This is RNA pyrophosphohydrolase from Burkholderia vietnamiensis (strain G4 / LMG 22486) (Burkholderia cepacia (strain R1808)).